We begin with the raw amino-acid sequence, 367 residues long: Anthranilate phosphoribosyltransferase (367 aa).

5-phospho-alpha-D-ribose 1-diphosphate contacts are provided by residues G105, 108 to 109 (GD), T113, 115 to 118 (NIST), 133 to 141 (KHGNRAASS), and G145. An anthranilate-binding site is contributed by G105. S117 serves as a coordination point for Mg(2+). Residue N136 participates in anthranilate binding. R191 lines the anthranilate pocket. 2 residues coordinate Mg(2+): D249 and E250.

It belongs to the anthranilate phosphoribosyltransferase family. As to quaternary structure, homodimer. Requires Mg(2+) as cofactor.

It carries out the reaction N-(5-phospho-beta-D-ribosyl)anthranilate + diphosphate = 5-phospho-alpha-D-ribose 1-diphosphate + anthranilate. It functions in the pathway amino-acid biosynthesis; L-tryptophan biosynthesis; L-tryptophan from chorismate: step 2/5. Its function is as follows. Catalyzes the transfer of the phosphoribosyl group of 5-phosphorylribose-1-pyrophosphate (PRPP) to anthranilate to yield N-(5'-phosphoribosyl)-anthranilate (PRA). The chain is Anthranilate phosphoribosyltransferase from Corynebacterium jeikeium (strain K411).